A 374-amino-acid chain; its full sequence is All-trans-retinol dehydrogenase [NAD(+)] ADH7 (374 aa).

Zn(2+)-binding residues include Cys-47, His-68, Cys-98, Cys-101, Cys-104, Cys-112, and Cys-174. NAD(+)-binding positions include 199–204 (GLGGVG), Asp-223, Lys-228, 292–294 (VGA), and Arg-369.

It belongs to the zinc-containing alcohol dehydrogenase family. Class-IV subfamily. As to quaternary structure, homodimer. It depends on Zn(2+) as a cofactor. As to expression, high expression in the stomach mucosa. Lower expression in eye, thymus, skin and ovary. Very low expression in small intestine, liver and uterus.

Its subcellular location is the cytoplasm. It catalyses the reaction a primary alcohol + NAD(+) = an aldehyde + NADH + H(+). It carries out the reaction 10-hydroxydecanoate + NAD(+) = 10-oxodecanoate + NADH + H(+). The enzyme catalyses all-trans-retinol + NAD(+) = all-trans-retinal + NADH + H(+). The catalysed reaction is 9-cis-retinol + NAD(+) = 9-cis-retinal + NADH + H(+). It catalyses the reaction all-trans-3,4-didehydroretinol + NAD(+) = all-trans-3,4-didehydroretinal + NADH + H(+). It carries out the reaction all-trans-4-hydroxyretinol + NAD(+) = all-trans-4-hydroxyretinal + NADH + H(+). The enzyme catalyses all-trans-4-oxoretinol + NAD(+) = all-trans-4-oxoretinal + NADH + H(+). The catalysed reaction is 12-hydroxydodecanoate + NAD(+) = 12-oxododecanoate + NADH + H(+). It catalyses the reaction 16-hydroxyhexadecanoate + NAD(+) = 16-oxohexadecanoate + NADH + H(+). It carries out the reaction hexan-1-ol + NAD(+) = hexanal + NADH + H(+). The enzyme catalyses (E)-hex-2-en-1-ol + NAD(+) = (E)-hex-2-enal + NADH + H(+). The catalysed reaction is (E)-4-hydroxynon-2-en-1-ol + NAD(+) = (E)-4-hydroxynon-2-enal + NADH + H(+). With respect to regulation, retinol oxidation is inhibited by the detergent Tween 80. Ethanol inhibits both all-trans-retinol and 9-cis-retinol oxidation. 13-cis-retinol is an effective competitive inhibitor of the 9-cis-retinol oxidation. All-trans-retinoic acid is a powerful inhibitor of all-trans-retinol oxidation. 13-cis-retinoic acid is a powerful inhibitor of all-trans-retinol oxidation. Cimetidine competitively inhibited ethanol oxidation. Catalyzes the NAD-dependent oxidation of all-trans-retinol, alcohol, aldehyde and omega-hydroxy fatty acids and their derivatives. Oxidizes preferentially all trans-retinol, all-trans-4-hydroxyretinol, 9-cis-retinol, 2-hexenol, and long chain omega-hydroxy fatty acids such as juniperic acid. In vitro can also catalyze the NADH-dependent reduction of all-trans-retinal and aldehydes and their derivatives. Reduces preferentially all trans-retinal, all-trans-4-oxoretinal and hexanal. Catalyzes in the oxidative direction with higher efficiency. Therefore may participate in retinoid metabolism, fatty acid omega-oxidation, and elimination of cytotoxic aldehydes produced by lipid peroxidation. The protein is All-trans-retinol dehydrogenase [NAD(+)] ADH7 (Adh7) of Mus musculus (Mouse).